A 409-amino-acid chain; its full sequence is Tyrosine--tRNA ligase (409 aa).

Tyr39 serves as a coordination point for L-tyrosine. The short motif at 44–53 (PTAASLHVGS) is the 'HIGH' region element. Tyr176 and Gln180 together coordinate L-tyrosine. The short motif at 236 to 240 (KMGKT) is the 'KMSKS' region element. Lys239 is a binding site for ATP. The region spanning 346–408 (ISLVDALVGL…GKKAHGVIQA (63 aa)) is the S4 RNA-binding domain.

Belongs to the class-I aminoacyl-tRNA synthetase family. TyrS type 1 subfamily. As to quaternary structure, homodimer.

It localises to the cytoplasm. The catalysed reaction is tRNA(Tyr) + L-tyrosine + ATP = L-tyrosyl-tRNA(Tyr) + AMP + diphosphate + H(+). In terms of biological role, catalyzes the attachment of tyrosine to tRNA(Tyr) in a two-step reaction: tyrosine is first activated by ATP to form Tyr-AMP and then transferred to the acceptor end of tRNA(Tyr). The polypeptide is Tyrosine--tRNA ligase (Zymomonas mobilis subsp. mobilis (strain ATCC 31821 / ZM4 / CP4)).